Here is a 154-residue protein sequence, read N- to C-terminus: Anaerobic ribonucleoside-triphosphate reductase-activating protein (154 aa).

Positions 26, 30, and 33 each coordinate [4Fe-4S] cluster. Residues 32-34 (GCY) and Gly74 each bind S-adenosyl-L-methionine.

Belongs to the organic radical-activating enzymes family. Forms a tetramer composed of two NrdD and two NrdG subunits. The cofactor is [4Fe-4S] cluster.

The protein localises to the cytoplasm. The enzyme catalyses glycyl-[protein] + reduced [flavodoxin] + S-adenosyl-L-methionine = glycin-2-yl radical-[protein] + semiquinone [flavodoxin] + 5'-deoxyadenosine + L-methionine + H(+). Functionally, activation of anaerobic ribonucleoside-triphosphate reductase under anaerobic conditions by generation of an organic free radical, using S-adenosylmethionine and reduced flavodoxin as cosubstrates to produce 5'-deoxy-adenosine. This Salmonella typhi protein is Anaerobic ribonucleoside-triphosphate reductase-activating protein (nrdG).